A 583-amino-acid chain; its full sequence is uncharacterized protein (583 aa).

The FAD-binding FR-type domain maps to 162-424 (YGIFAAPILD…RGVQQNPFAK (263 aa)).

Belongs to the flavoprotein pyridine nucleotide cytochrome reductase family. The cofactor is FAD.

Its subcellular location is the mitochondrion. This is an uncharacterized protein from Schizosaccharomyces pombe (strain 972 / ATCC 24843) (Fission yeast).